Reading from the N-terminus, the 165-residue chain is Transcription factor zip-10 (165 aa).

The segment covering 53-71 has biased composition (low complexity); the sequence is ASLGTSTTSSSRCSSTESS. The tract at residues 53 to 99 is disordered; the sequence is ASLGTSTTSSSRCSSTESSAAPGKIRRGRPQQEIADGQDAHSQKKRH. Residues 104-150 adopt a coiled-coil conformation; that stretch reads ARQYRAQMRQKVENVKSLHDEKEQLELEVKALRQAVSGLQQENAQKD.

It is found in the nucleus. In terms of biological role, transcription factor that regulates the expression of genes in response to changes in temperature. In particular, binds to the promoter region of genes such as asp-17 in response to severe cold to warm temperature transitions to promote gene expression. Promotes stress-induced death, particularly in older animals, following cold shock followed by warming and this may have evolved as a form of kin survival under thermal stress conditions, favoring the survival of younger animals. This is Transcription factor zip-10 from Caenorhabditis elegans.